A 1218-amino-acid chain; its full sequence is DNA-directed RNA polymerase subunit beta' (1218 aa).

Residues C60, C62, C75, and C78 each contribute to the Zn(2+) site. Positions 455, 457, and 459 each coordinate Mg(2+). Residues C824, C897, C904, and C907 each coordinate Zn(2+). The disordered stretch occupies residues 1195-1218; sequence ENEAQSDKSQDEQEIGEITVDMGE.

Belongs to the RNA polymerase beta' chain family. As to quaternary structure, the RNAP catalytic core consists of 2 alpha, 1 beta, 1 beta' and 1 omega subunit. When a sigma factor is associated with the core the holoenzyme is formed, which can initiate transcription. Mg(2+) is required as a cofactor. Zn(2+) serves as cofactor.

The enzyme catalyses RNA(n) + a ribonucleoside 5'-triphosphate = RNA(n+1) + diphosphate. Its function is as follows. DNA-dependent RNA polymerase catalyzes the transcription of DNA into RNA using the four ribonucleoside triphosphates as substrates. The polypeptide is DNA-directed RNA polymerase subunit beta' (Natranaerobius thermophilus (strain ATCC BAA-1301 / DSM 18059 / JW/NM-WN-LF)).